The following is a 302-amino-acid chain: Sulfate adenylyltransferase subunit 2 (302 aa).

It belongs to the PAPS reductase family. CysD subfamily. Heterodimer composed of CysD, the smaller subunit, and CysN.

The catalysed reaction is sulfate + ATP + H(+) = adenosine 5'-phosphosulfate + diphosphate. Its pathway is sulfur metabolism; hydrogen sulfide biosynthesis; sulfite from sulfate: step 1/3. Functionally, with CysN forms the ATP sulfurylase (ATPS) that catalyzes the adenylation of sulfate producing adenosine 5'-phosphosulfate (APS) and diphosphate, the first enzymatic step in sulfur assimilation pathway. APS synthesis involves the formation of a high-energy phosphoric-sulfuric acid anhydride bond driven by GTP hydrolysis by CysN coupled to ATP hydrolysis by CysD. The chain is Sulfate adenylyltransferase subunit 2 from Methylococcus capsulatus (strain ATCC 33009 / NCIMB 11132 / Bath).